A 347-amino-acid polypeptide reads, in one-letter code: NADH-ubiquinone oxidoreductase chain 2 (347 aa).

Helical transmembrane passes span 3-23 (PLAL…TMMS), 25-45 (HWLT…PILM), 59-79 (YFMT…INLM), 93-115 (VASN…HFWV), 150-170 (NTNL…WGGL), 178-198 (ILAY…PFNP), 200-220 (LTLL…MILA), 240-260 (MTIM…LSGF), 274-294 (NSII…YFYM), and 326-346 (LPTL…ISML).

Belongs to the complex I subunit 2 family. As to quaternary structure, core subunit of respiratory chain NADH dehydrogenase (Complex I) which is composed of 45 different subunits. Interacts with TMEM242.

It is found in the mitochondrion inner membrane. It catalyses the reaction a ubiquinone + NADH + 5 H(+)(in) = a ubiquinol + NAD(+) + 4 H(+)(out). Its function is as follows. Core subunit of the mitochondrial membrane respiratory chain NADH dehydrogenase (Complex I) which catalyzes electron transfer from NADH through the respiratory chain, using ubiquinone as an electron acceptor. Essential for the catalytic activity and assembly of complex I. The polypeptide is NADH-ubiquinone oxidoreductase chain 2 (Mammuthus primigenius (Siberian woolly mammoth)).